Here is a 562-residue protein sequence, read N- to C-terminus: Arginine--tRNA ligase (562 aa).

The 'HIGH' region signature appears at Pro-122–His-132.

The protein belongs to the class-I aminoacyl-tRNA synthetase family. In terms of assembly, monomer.

Its subcellular location is the cytoplasm. It catalyses the reaction tRNA(Arg) + L-arginine + ATP = L-arginyl-tRNA(Arg) + AMP + diphosphate. This Chlamydia felis (strain Fe/C-56) (Chlamydophila felis) protein is Arginine--tRNA ligase.